Here is a 458-residue protein sequence, read N- to C-terminus: Elongation factor 1-alpha (458 aa).

Gly-2 carries the n,N,N-trimethylglycine modification. Lys-3 is subject to N6,N6-dimethyllysine; alternate. Residue Lys-3 is modified to N6-methyllysine; alternate. A tr-type G domain is found at 5-240 (KTHVNVVVIG…DAIEPPVRPS (236 aa)). The segment at 14–21 (GHVDSGKS) is G1. Residue 14 to 21 (GHVDSGKS) coordinates GTP. Lys-30 carries the N6-methyllysine modification. The G2 stretch occupies residues 70–74 (GITID). At Lys-79 the chain carries N6,N6,N6-trimethyllysine. The interval 91–94 (DAPG) is G3. Residues 91–95 (DAPGH) and 153–156 (NKMD) each bind GTP. Residues 153-156 (NKMD) are G4. Residues 192–194 (SGW) are G5. At Lys-316 the chain carries N6,N6-dimethyllysine; alternate. N6-methyllysine; alternate is present on Lys-316. Lys-390 carries the post-translational modification N6-methyllysine.

This sequence belongs to the TRAFAC class translation factor GTPase superfamily. Classic translation factor GTPase family. EF-Tu/EF-1A subfamily.

It localises to the cytoplasm. This protein promotes the GTP-dependent binding of aminoacyl-tRNA to the A-site of ribosomes during protein biosynthesis. The polypeptide is Elongation factor 1-alpha (TEF-2) (Mucor circinelloides f. lusitanicus (Mucor racemosus var. lusitanicus)).